The primary structure comprises 179 residues: Ribulose bisphosphate carboxylase small subunit, chloroplastic 5 (179 aa).

The N-terminal 58 residues, methionine 1 to glutamine 58, are a transit peptide targeting the chloroplast.

It belongs to the RuBisCO small chain family. As to quaternary structure, heterohexadecamer of 8 large and 8 small subunits.

It is found in the plastid. It localises to the chloroplast. Functionally, ruBisCO catalyzes two reactions: the carboxylation of D-ribulose 1,5-bisphosphate, the primary event in carbon dioxide fixation, as well as the oxidative fragmentation of the pentose substrate. Both reactions occur simultaneously and in competition at the same active site. Although the small subunit is not catalytic it is essential for maximal activity. In Fritillaria agrestis (Stinkbells), this protein is Ribulose bisphosphate carboxylase small subunit, chloroplastic 5.